The following is a 160-amino-acid chain: Lipoprotein signal peptidase (160 aa).

Transmembrane regions (helical) follow at residues isoleucine 13–isoleucine 33, tryptophan 72–leucine 92, and serine 104–valine 124. Residues aspartate 125 and aspartate 143 contribute to the active site. The chain crosses the membrane as a helical span at residues tryptophan 134–methionine 154.

Belongs to the peptidase A8 family.

It is found in the cell inner membrane. The catalysed reaction is Release of signal peptides from bacterial membrane prolipoproteins. Hydrolyzes -Xaa-Yaa-Zaa-|-(S,diacylglyceryl)Cys-, in which Xaa is hydrophobic (preferably Leu), and Yaa (Ala or Ser) and Zaa (Gly or Ala) have small, neutral side chains.. It participates in protein modification; lipoprotein biosynthesis (signal peptide cleavage). This protein specifically catalyzes the removal of signal peptides from prolipoproteins. This chain is Lipoprotein signal peptidase, found in Buchnera aphidicola subsp. Acyrthosiphon pisum (strain Tuc7).